We begin with the raw amino-acid sequence, 294 residues long: tRNA dimethylallyltransferase (294 aa).

10 to 17 (GPTAVGKT) lines the ATP pocket. 12 to 17 (TAVGKT) is a binding site for substrate. The interval 35-38 (DSQQ) is interaction with substrate tRNA.

This sequence belongs to the IPP transferase family. As to quaternary structure, monomer. Requires Mg(2+) as cofactor.

It catalyses the reaction adenosine(37) in tRNA + dimethylallyl diphosphate = N(6)-dimethylallyladenosine(37) in tRNA + diphosphate. In terms of biological role, catalyzes the transfer of a dimethylallyl group onto the adenine at position 37 in tRNAs that read codons beginning with uridine, leading to the formation of N6-(dimethylallyl)adenosine (i(6)A). The protein is tRNA dimethylallyltransferase of Streptococcus pneumoniae (strain Hungary19A-6).